The sequence spans 247 residues: Adenosylcobinamide-GDP ribazoletransferase (247 aa).

The next 5 helical transmembrane spans lie at 34–54 (IITF…VFMV), 59–79 (CGVP…TGGF), 113–133 (GGLA…ELAL), 138–158 (ILAS…LLMY), and 194–214 (VLLP…AIFI).

This sequence belongs to the CobS family. The cofactor is Mg(2+).

The protein resides in the cell inner membrane. It carries out the reaction alpha-ribazole + adenosylcob(III)inamide-GDP = adenosylcob(III)alamin + GMP + H(+). The catalysed reaction is alpha-ribazole 5'-phosphate + adenosylcob(III)inamide-GDP = adenosylcob(III)alamin 5'-phosphate + GMP + H(+). The protein operates within cofactor biosynthesis; adenosylcobalamin biosynthesis; adenosylcobalamin from cob(II)yrinate a,c-diamide: step 7/7. Its function is as follows. Joins adenosylcobinamide-GDP and alpha-ribazole to generate adenosylcobalamin (Ado-cobalamin). Also synthesizes adenosylcobalamin 5'-phosphate from adenosylcobinamide-GDP and alpha-ribazole 5'-phosphate. This is Adenosylcobinamide-GDP ribazoletransferase from Escherichia coli O7:K1 (strain IAI39 / ExPEC).